The following is a 25-amino-acid chain: Large ribosomal subunit protein uL30 (25 aa).

This sequence belongs to the universal ribosomal protein uL30 family. In terms of assembly, part of the 50S ribosomal subunit.

The sequence is that of Large ribosomal subunit protein uL30 (rpmD) from Pseudomonas fluorescens biotype A.